A 343-amino-acid chain; its full sequence is Tryptophan--tRNA ligase (343 aa).

Residues Q15–T17 and G24–N25 each bind ATP. Residues P16–N25 carry the 'HIGH' region motif. D145 contributes to the L-tryptophan binding site. Residues G157 to D159, I196, and K205 to S209 contribute to the ATP site. The 'KMSKS' region motif lies at K205–S209.

It belongs to the class-I aminoacyl-tRNA synthetase family. In terms of assembly, homodimer.

Its subcellular location is the cytoplasm. It catalyses the reaction tRNA(Trp) + L-tryptophan + ATP = L-tryptophyl-tRNA(Trp) + AMP + diphosphate + H(+). Functionally, catalyzes the attachment of tryptophan to tRNA(Trp). The protein is Tryptophan--tRNA ligase of Mycobacterium leprae (strain TN).